The sequence spans 273 residues: Large ribosomal subunit protein uL2c (273 aa).

The segment covering 1–31 (MAIHLSKTSSPSTRNGAVNSQVKSNSRNRLI) has biased composition (polar residues). Disordered stretches follow at residues 1 to 53 (MAIH…GHRG) and 222 to 273 (MNPV…RRSK).

Belongs to the universal ribosomal protein uL2 family. As to quaternary structure, part of the 50S ribosomal subunit.

The protein resides in the plastid. The protein localises to the chloroplast. This Pisum sativum (Garden pea) protein is Large ribosomal subunit protein uL2c (rpl2).